The sequence spans 258 residues: Adenosylcobinamide-GDP ribazoletransferase (258 aa).

Helical transmembrane passes span 41–61 (FFPL…WLAS), 65–85 (PAPG…TGAF), 115–135 (IGAF…QLLM), 136–156 (AMAA…HAAS), 197–217 (LPLL…LLAA), and 236–256 (CLGL…LAWT).

The protein belongs to the CobS family. Mg(2+) serves as cofactor.

It localises to the cell inner membrane. The enzyme catalyses alpha-ribazole + adenosylcob(III)inamide-GDP = adenosylcob(III)alamin + GMP + H(+). The catalysed reaction is alpha-ribazole 5'-phosphate + adenosylcob(III)inamide-GDP = adenosylcob(III)alamin 5'-phosphate + GMP + H(+). Its pathway is cofactor biosynthesis; adenosylcobalamin biosynthesis; adenosylcobalamin from cob(II)yrinate a,c-diamide: step 7/7. Functionally, joins adenosylcobinamide-GDP and alpha-ribazole to generate adenosylcobalamin (Ado-cobalamin). Also synthesizes adenosylcobalamin 5'-phosphate from adenosylcobinamide-GDP and alpha-ribazole 5'-phosphate. The chain is Adenosylcobinamide-GDP ribazoletransferase from Ralstonia nicotianae (strain ATCC BAA-1114 / GMI1000) (Ralstonia solanacearum).